Here is a 222-residue protein sequence, read N- to C-terminus: Triosephosphate isomerase (222 aa).

A substrate-binding site is contributed by 9–11 (NLK). The Electrophile role is filled by His93. The Proton acceptor role is filled by Glu141. Substrate-binding positions include Ile146, Gly181, and 202–203 (AS).

It belongs to the triosephosphate isomerase family. In terms of assembly, homotetramer; dimer of dimers.

Its subcellular location is the cytoplasm. The enzyme catalyses D-glyceraldehyde 3-phosphate = dihydroxyacetone phosphate. The protein operates within carbohydrate biosynthesis; gluconeogenesis. Its pathway is carbohydrate degradation; glycolysis; D-glyceraldehyde 3-phosphate from glycerone phosphate: step 1/1. Involved in the gluconeogenesis. Catalyzes stereospecifically the conversion of dihydroxyacetone phosphate (DHAP) to D-glyceraldehyde-3-phosphate (G3P). In Methanoculleus marisnigri (strain ATCC 35101 / DSM 1498 / JR1), this protein is Triosephosphate isomerase.